A 737-amino-acid polypeptide reads, in one-letter code: Glycogen [starch] synthase, muscle (737 aa).

At serine 8 the chain carries Phosphoserine; by AMPK and PKA. At serine 11 the chain carries Phosphoserine. A UDP-binding site is contributed by lysine 39. Histidine 205 and arginine 211 together coordinate UDP-alpha-D-glucose. The alpha-D-glucose 6-phosphate site is built by histidine 291, glutamate 292, glutamine 294, histidine 297, and lysine 301. Arginine 331 provides a ligand contact to UDP. Arginine 331 contributes to the UDP-alpha-D-glucose binding site. A Phosphoserine modification is found at serine 412. Histidine 501 contributes to the alpha-D-glucose 6-phosphate binding site. Glutamate 510, tryptophan 512, and glycine 513 together coordinate UDP-alpha-D-glucose. Threonine 515 lines the UDP pocket. Alpha-D-glucose 6-phosphate contacts are provided by arginine 582 and arginine 586. A disordered region spans residues 634–737; sequence YRYPRPASVP…PTSSLGEERN (104 aa). Serine 641 carries the phosphoserine; by DYRK2, GSK3-alpha, GSK3-beta and PASK modification. Phosphoserine; by GSK3-alpha and GSK3-beta occurs at positions 645 and 649. Position 652 is a phosphoserine (serine 652). Position 653 is a phosphoserine; by GSK3-alpha and GSK3-beta (serine 653). Serine 657 is subject to Phosphoserine; by CK2. Over residues 658–681 the composition is skewed to acidic residues; sequence EDEEDPRNGPLEEDGERYDEDEEA. The span at 682–695 shows a compositional bias: basic and acidic residues; sequence AKDRRNIRAPEWPR. Position 698 is a phosphoserine (serine 698). The segment covering 698–714 has biased composition (polar residues); it reads SCTSSTSGSKRNSVDTA. Position 700 is a phosphothreonine (threonine 700). A Phosphoserine modification is found at serine 710. A compositionally biased stretch (low complexity) spans 715 to 737; it reads TSSSLSTPSEPLSPTSSLGEERN. Residue threonine 721 is modified to Phosphothreonine. A phosphoserine mark is found at serine 727 and serine 731.

Belongs to the glycosyltransferase 3 family. Part of the GYS1-GYG1 complex, a heterooctamer composed of a tetramer of GYS1 and 2 dimers of GYG1, where each GYS1 protomer binds to one GYG1 subunit (via GYG1 C-terminus); the GYS1 tetramer may dissociate from GYG1 dimers to continue glycogen polymerization on its own. In terms of processing, phosphorylation at Ser-8 by AMPK inactivates the enzyme activity. Primed phosphorylation at Ser-657 (site 5) by CSNK2A1 and CSNK2A2 is required for inhibitory phosphorylation at Ser-641 (site 3a), Ser-645 (site 3b), Ser-649 (site 3c) and Ser-653 (site 4) by GSK3A an GSK3B. Phosphorylated at Ser-641 by PASK, leading to inactivation; phosphorylation by PASK is inhibited by glycogen. Phosphorylated at Ser-641 by DYRK2, leading to inactivation. Dephosphorylation at Ser-641 and Ser-645 by PP1 activates the enzyme.

The catalysed reaction is [(1-&gt;4)-alpha-D-glucosyl](n) + UDP-alpha-D-glucose = [(1-&gt;4)-alpha-D-glucosyl](n+1) + UDP + H(+). Its pathway is glycan biosynthesis; glycogen biosynthesis. With respect to regulation, allosteric activation by glucose-6-phosphate. Phosphorylation reduces the activity towards UDP-glucose. When in the non-phosphorylated state, glycogen synthase does not require glucose-6-phosphate as an allosteric activator; when phosphorylated it does. Functionally, glycogen synthase participates in the glycogen biosynthetic process along with glycogenin and glycogen branching enzyme. Extends the primer composed of a few glucose units formed by glycogenin by adding new glucose units to it. In this context, glycogen synthase transfers the glycosyl residue from UDP-Glc to the non-reducing end of alpha-1,4-glucan. The protein is Glycogen [starch] synthase, muscle (GYS1) of Pongo abelii (Sumatran orangutan).